The following is a 143-amino-acid chain: Large ribosomal subunit protein uL13 (143 aa).

Belongs to the universal ribosomal protein uL13 family. Part of the 50S ribosomal subunit.

In terms of biological role, this protein is one of the early assembly proteins of the 50S ribosomal subunit, although it is not seen to bind rRNA by itself. It is important during the early stages of 50S assembly. The chain is Large ribosomal subunit protein uL13 from Dehalococcoides mccartyi (strain ATCC BAA-2100 / JCM 16839 / KCTC 5957 / BAV1).